A 637-amino-acid polypeptide reads, in one-letter code: Zinc-transporting ATPase (637 aa).

The next 4 helical transmembrane spans lie at glycine 43–isoleucine 63, isoleucine 89–phenylalanine 109, glycine 258–tryptophan 278, and methionine 286–leucine 306. The 4-aspartylphosphate intermediate role is filled by aspartate 337. Residues aspartate 535 and aspartate 539 each coordinate Mg(2+). The chain crosses the membrane as a helical span at residues valine 599–isoleucine 619.

It belongs to the cation transport ATPase (P-type) (TC 3.A.3) family. Type IB subfamily.

It is found in the cell membrane. It carries out the reaction Zn(2+)(out) + ATP(in) + H2O(in) = Zn(2+)(in) + ADP(in) + phosphate(in) + H(+)(in). In terms of biological role, couples the hydrolysis of ATP with the transport of zinc into the cell. Plays an important role in protecting cells against oxidative stress. ZosA-mediated zinc transport is required for post-transcriptional control of comK and competence development. This chain is Zinc-transporting ATPase (zosA), found in Bacillus subtilis (strain 168).